The primary structure comprises 285 residues: Bifunctional protein FolD (285 aa).

Residues 165-167 (GRS) and Ser-190 contribute to the NADP(+) site.

This sequence belongs to the tetrahydrofolate dehydrogenase/cyclohydrolase family. In terms of assembly, homodimer.

The catalysed reaction is (6R)-5,10-methylene-5,6,7,8-tetrahydrofolate + NADP(+) = (6R)-5,10-methenyltetrahydrofolate + NADPH. The enzyme catalyses (6R)-5,10-methenyltetrahydrofolate + H2O = (6R)-10-formyltetrahydrofolate + H(+). Its pathway is one-carbon metabolism; tetrahydrofolate interconversion. Functionally, catalyzes the oxidation of 5,10-methylenetetrahydrofolate to 5,10-methenyltetrahydrofolate and then the hydrolysis of 5,10-methenyltetrahydrofolate to 10-formyltetrahydrofolate. This Burkholderia pseudomallei (strain 1106a) protein is Bifunctional protein FolD.